Reading from the N-terminus, the 382-residue chain is Acetylserotonin O-methyltransferase (382 aa).

S-adenosyl-L-homocysteine contacts are provided by Gly218, Asp241, Asp261, Met262, and Lys275. The Proton acceptor role is filled by His279. Residues Glu308 and Glu347 contribute to the active site.

The protein belongs to the class I-like SAM-binding methyltransferase superfamily. Cation-independent O-methyltransferase family.

The protein resides in the cytoplasm. The catalysed reaction is N-acetylserotonin + S-adenosyl-L-methionine = melatonin + S-adenosyl-L-homocysteine + H(+). The protein operates within aromatic compound metabolism; melatonin biosynthesis; melatonin from serotonin: step 1/2. Its function is as follows. Methyltransferase which catalyzes the transfer of a methyl group onto N-acetylserotonin, producing melatonin (N-acetyl-5-methoxytryptamine). Does not seem to possess caffeate O-methyltransferase activity. Implicated in melatonin-dependent circadian dynamics of stomatal aperture to minimize night water loss and promote drought tolerance. Prevents seed germination by promoting melatonin biosynthesis. Promotes melatonin-triggered defense responses to the necrotrophic fungus Botrytis cinerea. Functionally, (Microbial infection) Promotes melatonin-triggered defense responses to the necrotrophic fungus Botrytis cinerea. This Arabidopsis thaliana (Mouse-ear cress) protein is Acetylserotonin O-methyltransferase.